The following is a 170-amino-acid chain: Large ribosomal subunit protein uL10 (170 aa).

Belongs to the universal ribosomal protein uL10 family. As to quaternary structure, part of the ribosomal stalk of the 50S ribosomal subunit. The N-terminus interacts with L11 and the large rRNA to form the base of the stalk. The C-terminus forms an elongated spine to which L12 dimers bind in a sequential fashion forming a multimeric L10(L12)X complex.

Its function is as follows. Forms part of the ribosomal stalk, playing a central role in the interaction of the ribosome with GTP-bound translation factors. The protein is Large ribosomal subunit protein uL10 of Chlamydia abortus (strain DSM 27085 / S26/3) (Chlamydophila abortus).